The sequence spans 77 residues: Acyl carrier protein (77 aa).

One can recognise a Carrier domain in the interval 1–76; sequence MENFDKVKDI…DAVKFINSIE (76 aa). Ser36 is subject to O-(pantetheine 4'-phosphoryl)serine.

The protein belongs to the acyl carrier protein (ACP) family. Post-translationally, 4'-phosphopantetheine is transferred from CoA to a specific serine of apo-ACP by AcpS. This modification is essential for activity because fatty acids are bound in thioester linkage to the sulfhydryl of the prosthetic group.

The protein resides in the cytoplasm. It participates in lipid metabolism; fatty acid biosynthesis. Carrier of the growing fatty acid chain in fatty acid biosynthesis. This Staphylococcus saprophyticus subsp. saprophyticus (strain ATCC 15305 / DSM 20229 / NCIMB 8711 / NCTC 7292 / S-41) protein is Acyl carrier protein.